A 189-amino-acid chain; its full sequence is Adenine phosphoribosyltransferase (189 aa).

This sequence belongs to the purine/pyrimidine phosphoribosyltransferase family. Homodimer.

The protein localises to the cytoplasm. It carries out the reaction AMP + diphosphate = 5-phospho-alpha-D-ribose 1-diphosphate + adenine. It participates in purine metabolism; AMP biosynthesis via salvage pathway; AMP from adenine: step 1/1. Catalyzes a salvage reaction resulting in the formation of AMP, that is energically less costly than de novo synthesis. This Frankia alni (strain DSM 45986 / CECT 9034 / ACN14a) protein is Adenine phosphoribosyltransferase.